We begin with the raw amino-acid sequence, 313 residues long: Aspartate carbamoyltransferase catalytic subunit (313 aa).

Residues Arg58 and Thr59 each contribute to the carbamoyl phosphate site. Lys86 contributes to the L-aspartate binding site. Carbamoyl phosphate is bound by residues Arg108, His136, and Gln139. Positions 169 and 223 each coordinate L-aspartate. The carbamoyl phosphate site is built by Gly264 and Pro265.

The protein belongs to the aspartate/ornithine carbamoyltransferase superfamily. ATCase family. Heterododecamer (2C3:3R2) of six catalytic PyrB chains organized as two trimers (C3), and six regulatory PyrI chains organized as three dimers (R2).

The catalysed reaction is carbamoyl phosphate + L-aspartate = N-carbamoyl-L-aspartate + phosphate + H(+). The protein operates within pyrimidine metabolism; UMP biosynthesis via de novo pathway; (S)-dihydroorotate from bicarbonate: step 2/3. In terms of biological role, catalyzes the condensation of carbamoyl phosphate and aspartate to form carbamoyl aspartate and inorganic phosphate, the committed step in the de novo pyrimidine nucleotide biosynthesis pathway. This chain is Aspartate carbamoyltransferase catalytic subunit, found in Syntrophotalea carbinolica (strain DSM 2380 / NBRC 103641 / GraBd1) (Pelobacter carbinolicus).